Here is a 213-residue protein sequence, read N- to C-terminus: Octanoyltransferase (213 aa).

One can recognise a BPL/LPL catalytic domain in the interval 32 to 207 (ESTLDEIWLV…NILALLNNPD (176 aa)). Substrate-binding positions include 71 to 78 (RGGQVTYH), 138 to 140 (SLG), and 151 to 153 (GLA). The Acyl-thioester intermediate role is filled by cysteine 169.

Belongs to the LipB family.

It localises to the cytoplasm. It catalyses the reaction octanoyl-[ACP] + L-lysyl-[protein] = N(6)-octanoyl-L-lysyl-[protein] + holo-[ACP] + H(+). It functions in the pathway protein modification; protein lipoylation via endogenous pathway; protein N(6)-(lipoyl)lysine from octanoyl-[acyl-carrier-protein]: step 1/2. Functionally, catalyzes the transfer of endogenously produced octanoic acid from octanoyl-acyl-carrier-protein onto the lipoyl domains of lipoate-dependent enzymes. Lipoyl-ACP can also act as a substrate although octanoyl-ACP is likely to be the physiological substrate. The sequence is that of Octanoyltransferase from Escherichia coli O17:K52:H18 (strain UMN026 / ExPEC).